The primary structure comprises 281 residues: Pantothenate synthetase (281 aa).

Position 30–37 (30–37 (MGYLHEGH)) interacts with ATP. The active-site Proton donor is His37. Gln61 is a (R)-pantoate binding site. Gln61 lines the beta-alanine pocket. An ATP-binding site is contributed by 147 to 150 (GQKD). Gln153 provides a ligand contact to (R)-pantoate. ATP contacts are provided by residues Val176 and 184 to 187 (MSSR).

It belongs to the pantothenate synthetase family. As to quaternary structure, homodimer.

It is found in the cytoplasm. The enzyme catalyses (R)-pantoate + beta-alanine + ATP = (R)-pantothenate + AMP + diphosphate + H(+). It functions in the pathway cofactor biosynthesis; (R)-pantothenate biosynthesis; (R)-pantothenate from (R)-pantoate and beta-alanine: step 1/1. Catalyzes the condensation of pantoate with beta-alanine in an ATP-dependent reaction via a pantoyl-adenylate intermediate. The sequence is that of Pantothenate synthetase from Caldicellulosiruptor saccharolyticus (strain ATCC 43494 / DSM 8903 / Tp8T 6331).